Consider the following 510-residue polypeptide: Probable cytosol aminopeptidase (510 aa).

Positions 272 and 277 each coordinate Mn(2+). Residue lysine 284 is part of the active site. The Mn(2+) site is built by aspartate 296, aspartate 355, and glutamate 357. Arginine 359 is an active-site residue.

Belongs to the peptidase M17 family. Requires Mn(2+) as cofactor.

The protein localises to the cytoplasm. The enzyme catalyses Release of an N-terminal amino acid, Xaa-|-Yaa-, in which Xaa is preferably Leu, but may be other amino acids including Pro although not Arg or Lys, and Yaa may be Pro. Amino acid amides and methyl esters are also readily hydrolyzed, but rates on arylamides are exceedingly low.. It catalyses the reaction Release of an N-terminal amino acid, preferentially leucine, but not glutamic or aspartic acids.. In terms of biological role, presumably involved in the processing and regular turnover of intracellular proteins. Catalyzes the removal of unsubstituted N-terminal amino acids from various peptides. The sequence is that of Probable cytosol aminopeptidase from Synechococcus sp. (strain JA-2-3B'a(2-13)) (Cyanobacteria bacterium Yellowstone B-Prime).